The chain runs to 292 residues: NAD kinase (292 aa).

Asp73 functions as the Proton acceptor in the catalytic mechanism. NAD(+) contacts are provided by residues 73–74 (DG), 147–148 (NE), His158, Arg175, Asp177, 188–193 (TAYSLS), and Gln247.

Belongs to the NAD kinase family. A divalent metal cation is required as a cofactor.

It localises to the cytoplasm. The catalysed reaction is NAD(+) + ATP = ADP + NADP(+) + H(+). Its function is as follows. Involved in the regulation of the intracellular balance of NAD and NADP, and is a key enzyme in the biosynthesis of NADP. Catalyzes specifically the phosphorylation on 2'-hydroxyl of the adenosine moiety of NAD to yield NADP. This Escherichia coli O7:K1 (strain IAI39 / ExPEC) protein is NAD kinase.